A 637-amino-acid polypeptide reads, in one-letter code: Limonene synthase, chloroplastic (637 aa).

The transit peptide at 1-56 directs the protein to the chloroplast; it reads MALLSIVSLQVPKSCGLKSLISSSNVQKALCISTAVPTLRMRRRQKALVINMKLTT. Mg(2+)-binding residues include Asp388, Asp392, and Asp540. Residues 388 to 392 carry the DDXXD motif motif; that stretch reads DDIYD.

This sequence belongs to the terpene synthase family. Tpsd subfamily. It depends on Mg(2+) as a cofactor. Requires Mn(2+) as cofactor. K(+) serves as cofactor.

It is found in the plastid. It localises to the chloroplast. The catalysed reaction is (2E)-geranyl diphosphate = (4S)-limonene + diphosphate. The protein operates within terpene metabolism; oleoresin biosynthesis. Involved in defensive oleoresin formation in conifers in response to insect attack or other injury. Involved in monoterpene (C10) olefins biosynthesis. In Abies grandis (Grand fir), this protein is Limonene synthase, chloroplastic (ag10).